The primary structure comprises 132 residues: Small ribosomal subunit protein uS8 (132 aa).

This sequence belongs to the universal ribosomal protein uS8 family. As to quaternary structure, part of the 30S ribosomal subunit. Contacts proteins S5 and S12.

One of the primary rRNA binding proteins, it binds directly to 16S rRNA central domain where it helps coordinate assembly of the platform of the 30S subunit. This Gluconobacter oxydans (strain 621H) (Gluconobacter suboxydans) protein is Small ribosomal subunit protein uS8.